A 311-amino-acid chain; its full sequence is Methionyl-tRNA formyltransferase (311 aa).

112–115 (SLLP) provides a ligand contact to (6S)-5,6,7,8-tetrahydrofolate.

The protein belongs to the Fmt family.

The enzyme catalyses L-methionyl-tRNA(fMet) + (6R)-10-formyltetrahydrofolate = N-formyl-L-methionyl-tRNA(fMet) + (6S)-5,6,7,8-tetrahydrofolate + H(+). Functionally, attaches a formyl group to the free amino group of methionyl-tRNA(fMet). The formyl group appears to play a dual role in the initiator identity of N-formylmethionyl-tRNA by promoting its recognition by IF2 and preventing the misappropriation of this tRNA by the elongation apparatus. This chain is Methionyl-tRNA formyltransferase, found in Agrobacterium fabrum (strain C58 / ATCC 33970) (Agrobacterium tumefaciens (strain C58)).